The sequence spans 568 residues: Protein NDNF (568 aa).

The first 19 residues, M1–T19, serve as a signal peptide directing secretion. 2 consecutive Fibronectin type-III domains span residues N261–F331 and P445–T564. 2 N-linked (GlcNAc...) asparagine glycosylation sites follow: N322 and N488.

In terms of assembly, binds heparin and chondroitin sulfate. O-glycosylated; contains heparan sulfate and chondroitin sulfate. Post-translationally, N-glycosylated. Expressed in brain and spinal cord with no expression detected in heart, kidney or liver. Expressed by neurons but not by astrocytes. In the brain, detected in the cerebrum, cerebellum and olfactory bulbs. In the cerebral cortex, highly expressed in Cajal-Retzius cells. Also expressed in hippocampal neurons and in Purkinje and granule cells of the cerebellum (at protein level). Expressed in neurons along the GnRH migratory route.

It is found in the secreted. Its function is as follows. Secretory protein that plays a role in various cellular processes. Acts as a chemorepellent acting on gonadotropin-releasing hormone (GnRH) expressing neurons regulating their migration to the hypothalamus. Also promotes neuron migration, growth and survival as well as neurite outgrowth and is involved in the development of the olfactory system. May also act through the regulation of growth factors activity and downstream signaling. Also regulates extracellular matrix assembly and cell adhesiveness. Promotes endothelial cell survival, vessel formation and plays an important role in the process of revascularization through NOS3-dependent mechanisms. The chain is Protein NDNF (Ndnf) from Mus musculus (Mouse).